Here is a 307-residue protein sequence, read N- to C-terminus: Protoheme IX farnesyltransferase (307 aa).

Helical transmembrane passes span valine 31 to valine 51, tryptophan 53 to isoleucine 73, threonine 103 to asparagine 123, leucine 125 to leucine 145, isoleucine 153 to glycine 173, alanine 179 to leucine 199, leucine 223 to tyrosine 243, serine 246 to tryptophan 266, and isoleucine 285 to proline 305.

Belongs to the UbiA prenyltransferase family. Protoheme IX farnesyltransferase subfamily.

The protein localises to the cell inner membrane. The catalysed reaction is heme b + (2E,6E)-farnesyl diphosphate + H2O = Fe(II)-heme o + diphosphate. It functions in the pathway porphyrin-containing compound metabolism; heme O biosynthesis; heme O from protoheme: step 1/1. Converts heme B (protoheme IX) to heme O by substitution of the vinyl group on carbon 2 of heme B porphyrin ring with a hydroxyethyl farnesyl side group. The sequence is that of Protoheme IX farnesyltransferase from Cupriavidus taiwanensis (strain DSM 17343 / BCRC 17206 / CCUG 44338 / CIP 107171 / LMG 19424 / R1) (Ralstonia taiwanensis (strain LMG 19424)).